A 328-amino-acid polypeptide reads, in one-letter code: Ubiquitin-conjugating enzyme E2 Z (328 aa).

A UBC core domain is found at 71–225; that stretch reads QCILRIKRDI…IRHETMRVAV (155 aa). Cys160 serves as the catalytic Glycyl thioester intermediate. The interval 295 to 328 is disordered; sequence RLREKCPPEDNDGDSDSDTSSSGTDPDSQGSSQP. The segment covering 312-328 has biased composition (low complexity); that stretch reads DTSSSGTDPDSQGSSQP.

The protein belongs to the ubiquitin-conjugating enzyme family.

The protein resides in the cytoplasm. It is found in the nucleus. It catalyses the reaction S-ubiquitinyl-[E1 ubiquitin-activating enzyme]-L-cysteine + [E2 ubiquitin-conjugating enzyme]-L-cysteine = [E1 ubiquitin-activating enzyme]-L-cysteine + S-ubiquitinyl-[E2 ubiquitin-conjugating enzyme]-L-cysteine.. The protein operates within protein modification; protein ubiquitination. In terms of biological role, catalyzes the covalent attachment of ubiquitin to other proteins. May be involved in apoptosis regulation. This Danio rerio (Zebrafish) protein is Ubiquitin-conjugating enzyme E2 Z (ube2z).